The following is a 1265-amino-acid chain: Dynactin subunit 1 (1265 aa).

Residues 27–69 (GMTSFAVGKWVGVVLDEPKGKNSGSIKGQQYFQCDENCGMFVR) form the CAP-Gly domain. Residues 81–179 (GSRRSIEDVS…GNGAASHASS (99 aa)) form a disordered region. A phosphoserine mark is found at Ser-85, Ser-110, Ser-114, Ser-117, and Ser-121. 2 stretches are compositionally biased toward low complexity: residues 103–138 (RLSS…SSSS) and 161–177 (AEGA…ASHA). Ser-183 bears the Phosphoserine mark. 3 coiled-coil regions span residues 213 to 570 (NSGA…ESLQ), 812 to 836 (LIQF…RLPS), and 967 to 1084 (QRAQ…NSTT). The segment at 1082 to 1106 (STTGKVQPGSESHSPHNISLSGNTS) is disordered. Ser-1117 carries the post-translational modification Phosphoserine. The stretch at 1128–1160 (EEVELLKNAFNQERNQRLRLQAQDMRAKLSQFE) forms a coiled coil.

This sequence belongs to the dynactin 150 kDa subunit family. Monomer and homodimer. Subunit of dynactin, a multiprotein complex part of a tripartite complex with dynein and a adapter, such as BICDL1, BICD2 or HOOK3. The dynactin complex is built around ACTR1A/ACTB filament and consists of an actin-related filament composed of a shoulder domain, a pointed end and a barbed end. Its length is defined by its flexible shoulder domain. The soulder is composed of 2 DCTN1 subunits, 4 DCTN2 and 2 DCTN3. DCTN1/p150(glued) binds directly to microtubules and to cytoplasmic dynein.

Its subcellular location is the cytoplasm. It localises to the cytoskeleton. Part of the dynactin complex that activates the molecular motor dynein for ultra-processive transport along microtubules. Plays a key role in dynein-mediated retrograde transport of vesicles and organelles along microtubules by recruiting and tethering dynein to microtubules. Binds to both dynein and microtubules providing a link between specific cargos, microtubules and dynein. Essential for targeting dynein to microtubule plus ends, recruiting dynein to membranous cargos and enhancing dynein processivity (the ability to move along a microtubule for a long distance without falling off the track). Can also act as a brake to slow the dynein motor during motility along the microtubule. Can regulate microtubule stability by promoting microtubule formation, nucleation and polymerization and by inhibiting microtubule catastrophe in neurons. Inhibits microtubule catastrophe by binding both to microtubules and to tubulin, leading to enhanced microtubule stability along the axon. Plays a role in metaphase spindle orientation. Plays a role in centriole cohesion and subdistal appendage organization and function. Its recruitment to the centriole in a KIF3A-dependent manner is essential for the maintenance of centriole cohesion and the formation of subdistal appendage. Also required for microtubule anchoring at the mother centriole. Plays a role in primary cilia formation. The polypeptide is Dynactin subunit 1 (Drosophila melanogaster (Fruit fly)).